The primary structure comprises 297 residues: Transcriptional regulator protein Pur-beta (297 aa).

Disordered regions lie at residues 1-26 and 275-297; these read MADG…EQET and QERH…VDDD. The residue at position 2 (Ala-2) is an N-acetylalanine. Residues 23-246 are DNA-binding; it reads EQETQELASK…LRVSEVKPSY (224 aa). Positions 275–288 are enriched in basic and acidic residues; the sequence is QERHRDKMYERREE.

It belongs to the PUR DNA-binding protein family.

It is found in the nucleus. Transcriptional regulator which can act as an activator or a repressor. The protein is Transcriptional regulator protein Pur-beta (purb) of Danio rerio (Zebrafish).